A 1238-amino-acid chain; its full sequence is DNA-directed RNA polymerase subunit beta (1238 aa).

The disordered stretch occupies residues 1187–1238 (EGREDTPPEEVYEESYEEGFEEEIEELPEDIDFEPDSFDIENDDLDLEDFDI). Over residues 1193–1238 (PPEEVYEESYEEGFEEEIEELPEDIDFEPDSFDIENDDLDLEDFDI) the composition is skewed to acidic residues.

The protein belongs to the RNA polymerase beta chain family. In terms of assembly, the RNAP catalytic core consists of 2 alpha, 1 beta, 1 beta' and 1 omega subunit. When a sigma factor is associated with the core the holoenzyme is formed, which can initiate transcription.

It catalyses the reaction RNA(n) + a ribonucleoside 5'-triphosphate = RNA(n+1) + diphosphate. Its function is as follows. DNA-dependent RNA polymerase catalyzes the transcription of DNA into RNA using the four ribonucleoside triphosphates as substrates. The sequence is that of DNA-directed RNA polymerase subunit beta from Thermoanaerobacter pseudethanolicus (strain ATCC 33223 / 39E) (Clostridium thermohydrosulfuricum).